The chain runs to 215 residues: Phosphatidylserine decarboxylase proenzyme (215 aa).

Serine 181 (schiff-base intermediate with substrate; via pyruvic acid) is an active-site residue. Pyruvic acid (Ser); by autocatalysis is present on serine 181.

This sequence belongs to the phosphatidylserine decarboxylase family. PSD-A subfamily. In terms of assembly, heterodimer of a large membrane-associated beta subunit and a small pyruvoyl-containing alpha subunit. Requires pyruvate as cofactor. In terms of processing, is synthesized initially as an inactive proenzyme. Formation of the active enzyme involves a self-maturation process in which the active site pyruvoyl group is generated from an internal serine residue via an autocatalytic post-translational modification. Two non-identical subunits are generated from the proenzyme in this reaction, and the pyruvate is formed at the N-terminus of the alpha chain, which is derived from the carboxyl end of the proenzyme. The post-translation cleavage follows an unusual pathway, termed non-hydrolytic serinolysis, in which the side chain hydroxyl group of the serine supplies its oxygen atom to form the C-terminus of the beta chain, while the remainder of the serine residue undergoes an oxidative deamination to produce ammonia and the pyruvoyl prosthetic group on the alpha chain.

The protein resides in the cell membrane. The catalysed reaction is a 1,2-diacyl-sn-glycero-3-phospho-L-serine + H(+) = a 1,2-diacyl-sn-glycero-3-phosphoethanolamine + CO2. It participates in phospholipid metabolism; phosphatidylethanolamine biosynthesis; phosphatidylethanolamine from CDP-diacylglycerol: step 2/2. Catalyzes the formation of phosphatidylethanolamine (PtdEtn) from phosphatidylserine (PtdSer). This Polynucleobacter asymbioticus (strain DSM 18221 / CIP 109841 / QLW-P1DMWA-1) (Polynucleobacter necessarius subsp. asymbioticus) protein is Phosphatidylserine decarboxylase proenzyme.